The chain runs to 228 residues: Cytochrome b5 domain-containing protein 1 (228 aa).

A Cytochrome b5 heme-binding domain is found at 17–83 (RRYFTPAEVA…DPKTRDIRKH (67 aa)). Heme contacts are provided by tyrosine 52 and histidine 83.

The protein belongs to the cytochrome b5 family.

Its subcellular location is the cytoplasm. It localises to the cytoskeleton. The protein localises to the cilium axoneme. Radial spoke stalk protein that binds heme under oxidizing conditions. Required for the coordinated beating of multiple cilia maybe by functioning in a redox signaling pathway. The chain is Cytochrome b5 domain-containing protein 1 from Homo sapiens (Human).